The sequence spans 354 residues: Holliday junction branch migration complex subunit RuvB (354 aa).

The tract at residues 1–22 is disordered; that stretch reads MTLQTDDFAPAPARRVVSAAPA. The interval 5 to 194 is large ATPase domain (RuvB-L); the sequence is TDDFAPAPAR…FGIVARLEFY (190 aa). Positions 9–22 are enriched in low complexity; the sequence is APAPARRVVSAAPA. Residues L33, R34, G75, K78, T79, T80, 141-143, R184, Y194, and R231 contribute to the ATP site; that span reads EDY. T79 is a Mg(2+) binding site. A small ATPAse domain (RuvB-S) region spans residues 195-265; the sequence is SAQELARIVK…IAERALAMLD (71 aa). Residues 268 to 354 are head domain (RuvB-H); it reads PEGLDVMDRK…GAQAPGLFAV (87 aa). Residues R323 and R328 each coordinate DNA.

This sequence belongs to the RuvB family. As to quaternary structure, homohexamer. Forms an RuvA(8)-RuvB(12)-Holliday junction (HJ) complex. HJ DNA is sandwiched between 2 RuvA tetramers; dsDNA enters through RuvA and exits via RuvB. An RuvB hexamer assembles on each DNA strand where it exits the tetramer. Each RuvB hexamer is contacted by two RuvA subunits (via domain III) on 2 adjacent RuvB subunits; this complex drives branch migration. In the full resolvosome a probable DNA-RuvA(4)-RuvB(12)-RuvC(2) complex forms which resolves the HJ.

Its subcellular location is the cytoplasm. It catalyses the reaction ATP + H2O = ADP + phosphate + H(+). In terms of biological role, the RuvA-RuvB-RuvC complex processes Holliday junction (HJ) DNA during genetic recombination and DNA repair, while the RuvA-RuvB complex plays an important role in the rescue of blocked DNA replication forks via replication fork reversal (RFR). RuvA specifically binds to HJ cruciform DNA, conferring on it an open structure. The RuvB hexamer acts as an ATP-dependent pump, pulling dsDNA into and through the RuvAB complex. RuvB forms 2 homohexamers on either side of HJ DNA bound by 1 or 2 RuvA tetramers; 4 subunits per hexamer contact DNA at a time. Coordinated motions by a converter formed by DNA-disengaged RuvB subunits stimulates ATP hydrolysis and nucleotide exchange. Immobilization of the converter enables RuvB to convert the ATP-contained energy into a lever motion, pulling 2 nucleotides of DNA out of the RuvA tetramer per ATP hydrolyzed, thus driving DNA branch migration. The RuvB motors rotate together with the DNA substrate, which together with the progressing nucleotide cycle form the mechanistic basis for DNA recombination by continuous HJ branch migration. Branch migration allows RuvC to scan DNA until it finds its consensus sequence, where it cleaves and resolves cruciform DNA. The protein is Holliday junction branch migration complex subunit RuvB of Verminephrobacter eiseniae (strain EF01-2).